The primary structure comprises 867 residues: Leucine--tRNA ligase (867 aa).

The 'HIGH' region signature appears at Pro40 to His51. The 'KMSKS' region motif lies at Lys638–Ser642. Lys641 contributes to the ATP binding site.

Belongs to the class-I aminoacyl-tRNA synthetase family.

Its subcellular location is the cytoplasm. The catalysed reaction is tRNA(Leu) + L-leucine + ATP = L-leucyl-tRNA(Leu) + AMP + diphosphate. This chain is Leucine--tRNA ligase, found in Leptospira biflexa serovar Patoc (strain Patoc 1 / Ames).